A 120-amino-acid chain; its full sequence is DNA-directed RNA polymerase II subunit rpb11 (120 aa).

It belongs to the archaeal Rpo11/eukaryotic RPB11/RPC19 RNA polymerase subunit family. In terms of assembly, component of the RNA polymerase II (Pol II) complex consisting of 12 subunits.

The protein resides in the nucleus. Its function is as follows. DNA-dependent RNA polymerase catalyzes the transcription of DNA into RNA using the four ribonucleoside triphosphates as substrates. Component of RNA polymerase II which synthesizes mRNA precursors and many functional non-coding RNAs. Pol II is the central component of the basal RNA polymerase II transcription machinery. It is composed of mobile elements that move relative to each other. RPB11 is part of the core element with the central large cleft. This is DNA-directed RNA polymerase II subunit rpb11 (polr2j) from Dictyostelium discoideum (Social amoeba).